A 240-amino-acid chain; its full sequence is Predicted GPI-anchored protein 58 (240 aa).

Residues 1–18 form the signal peptide; it reads MQFSTLVSLAAVIVSTNA. Positions 41–216 are disordered; the sequence is HTNCPASSPA…NSTGPSSVPT (176 aa). Over residues 51–86 the composition is skewed to pro residues; sequence TPAPAPSASAPAPPAPEQPEPSAPAPAPSAPAPEQP. Positions 87–103 are enriched in low complexity; sequence EQPATPATPAAPATPAT. Pro residues-rich tracts occupy residues 104-137 and 153-192; these read PAAP…PEQP and APAP…PAPS. Residues 193 to 216 are compositionally biased toward low complexity; the sequence is APASVPEQPASSVSNSTGPSSVPT. N-linked (GlcNAc...) asparagine glycosylation occurs at Asn-207. A lipid anchor (GPI-anchor amidated glycine) is attached at Gly-219. Positions 220–240 are cleaved as a propeptide — removed in mature form; it reads AAAKQYITGSVAVIAAALLAL.

It localises to the cell membrane. The sequence is that of Predicted GPI-anchored protein 58 (PGA58) from Candida albicans (strain SC5314 / ATCC MYA-2876) (Yeast).